A 170-amino-acid chain; its full sequence is ATP synthase subunit b (170 aa).

The chain crosses the membrane as a helical span at residues 22 to 41 (ILNWAVVVFGLYKFLPGFLG). Residues 76-98 (LSSAAEKASQIKADSLKRSESIR) are disordered. Basic and acidic residues predominate over residues 89–98 (DSLKRSESIR).

The protein belongs to the ATPase B chain family. As to quaternary structure, F-type ATPases have 2 components, F(1) - the catalytic core - and F(0) - the membrane proton channel. F(1) has five subunits: alpha(3), beta(3), gamma(1), delta(1), epsilon(1). F(0) has four main subunits: a(1), b(1), b'(1) and c(10-14). The alpha and beta chains form an alternating ring which encloses part of the gamma chain. F(1) is attached to F(0) by a central stalk formed by the gamma and epsilon chains, while a peripheral stalk is formed by the delta, b and b' chains.

Its subcellular location is the cellular thylakoid membrane. F(1)F(0) ATP synthase produces ATP from ADP in the presence of a proton or sodium gradient. F-type ATPases consist of two structural domains, F(1) containing the extramembraneous catalytic core and F(0) containing the membrane proton channel, linked together by a central stalk and a peripheral stalk. During catalysis, ATP synthesis in the catalytic domain of F(1) is coupled via a rotary mechanism of the central stalk subunits to proton translocation. Functionally, component of the F(0) channel, it forms part of the peripheral stalk, linking F(1) to F(0). This is ATP synthase subunit b from Prochlorococcus marinus (strain AS9601).